The primary structure comprises 181 residues: Probable GTP-binding protein EngB (181 aa).

Residues 18–181 (PKNEICFVGR…LQDLVNNLFN (164 aa)) form the EngB-type G domain. GTP-binding positions include 26–33 (GRSNVGKS), 52–56 (GKTKL), 70–73 (DLPG), 137–140 (TKRD), and 164–166 (VSI). Mg(2+) is bound by residues Ser33 and Thr54.

The protein belongs to the TRAFAC class TrmE-Era-EngA-EngB-Septin-like GTPase superfamily. EngB GTPase family. The cofactor is Mg(2+).

Functionally, necessary for normal cell division and for the maintenance of normal septation. The chain is Probable GTP-binding protein EngB from Mycoplasma mobile (strain ATCC 43663 / 163K / NCTC 11711) (Mesomycoplasma mobile).